A 102-amino-acid chain; its full sequence is NADH-quinone oxidoreductase subunit K (102 aa).

3 helical membrane-spanning segments follow: residues 6-26 (MEHG…GLMV), 30-50 (ILFI…AFVV), and 62-82 (VMFI…LAIL).

The protein belongs to the complex I subunit 4L family. In terms of assembly, NDH-1 is composed of 13 different subunits. Subunits NuoA, H, J, K, L, M, N constitute the membrane sector of the complex.

Its subcellular location is the cell inner membrane. It catalyses the reaction a quinone + NADH + 5 H(+)(in) = a quinol + NAD(+) + 4 H(+)(out). In terms of biological role, NDH-1 shuttles electrons from NADH, via FMN and iron-sulfur (Fe-S) centers, to quinones in the respiratory chain. The immediate electron acceptor for the enzyme in this species is believed to be ubiquinone. Couples the redox reaction to proton translocation (for every two electrons transferred, four hydrogen ions are translocated across the cytoplasmic membrane), and thus conserves the redox energy in a proton gradient. This Ectopseudomonas mendocina (strain ymp) (Pseudomonas mendocina) protein is NADH-quinone oxidoreductase subunit K.